The sequence spans 477 residues: Ribulose bisphosphate carboxylase large chain (477 aa).

Residues 1–2 constitute a propeptide that is removed on maturation; the sequence is MS. P3 is subject to N-acetylproline. K14 is subject to N6,N6,N6-trimethyllysine. T173 serves as a coordination point for substrate. The active-site Proton acceptor is the K175. K177 lines the substrate pocket. Residues K201, D203, and E204 each contribute to the Mg(2+) site. An N6-carboxylysine modification is found at K201. The active-site Proton acceptor is the H294. Substrate contacts are provided by R295, H327, and S379.

Belongs to the RuBisCO large chain family. Type I subfamily. As to quaternary structure, heterohexadecamer of 8 large chains and 8 small chains; disulfide-linked. The disulfide link is formed within the large subunit homodimers. It depends on Mg(2+) as a cofactor. The disulfide bond which can form in the large chain dimeric partners within the hexadecamer appears to be associated with oxidative stress and protein turnover.

Its subcellular location is the plastid. It is found in the chloroplast. The enzyme catalyses 2 (2R)-3-phosphoglycerate + 2 H(+) = D-ribulose 1,5-bisphosphate + CO2 + H2O. It catalyses the reaction D-ribulose 1,5-bisphosphate + O2 = 2-phosphoglycolate + (2R)-3-phosphoglycerate + 2 H(+). Its function is as follows. RuBisCO catalyzes two reactions: the carboxylation of D-ribulose 1,5-bisphosphate, the primary event in carbon dioxide fixation, as well as the oxidative fragmentation of the pentose substrate in the photorespiration process. Both reactions occur simultaneously and in competition at the same active site. This chain is Ribulose bisphosphate carboxylase large chain, found in Gerbera jamesonii (Transvaal daisy).